The primary structure comprises 208 residues: LexA repressor (208 aa).

Positions 28 to 48 (VREIGEAVGLASSSTVHGHLA) form a DNA-binding region, H-T-H motif. Catalysis depends on for autocatalytic cleavage activity residues Ser130 and Lys168.

This sequence belongs to the peptidase S24 family. As to quaternary structure, homodimer.

It catalyses the reaction Hydrolysis of Ala-|-Gly bond in repressor LexA.. Its function is as follows. Represses a number of genes involved in the response to DNA damage (SOS response), including recA and lexA. In the presence of single-stranded DNA, RecA interacts with LexA causing an autocatalytic cleavage which disrupts the DNA-binding part of LexA, leading to derepression of the SOS regulon and eventually DNA repair. This Shouchella clausii (strain KSM-K16) (Alkalihalobacillus clausii) protein is LexA repressor.